The following is a 148-amino-acid chain: Aspartate carbamoyltransferase regulatory chain (148 aa).

Residues Cys106, Cys111, Cys134, and Cys137 each coordinate Zn(2+).

It belongs to the PyrI family. Contains catalytic and regulatory chains. Zn(2+) serves as cofactor.

In terms of biological role, involved in allosteric regulation of aspartate carbamoyltransferase. This chain is Aspartate carbamoyltransferase regulatory chain, found in Methanococcus maripaludis (strain C5 / ATCC BAA-1333).